The sequence spans 680 residues: UvrABC system protein C (680 aa).

Positions 66–144 constitute a GIY-YIG domain; it reads NSPGVYRMFN…IKRLRPRFNV (79 aa). One can recognise a UVR domain in the interval 254 to 289; that stretch reads QKVKSHMAEAMNQAAEDLDFERAAIYRDRLAALSHV.

Belongs to the UvrC family. Interacts with UvrB in an incision complex.

Its subcellular location is the cytoplasm. Functionally, the UvrABC repair system catalyzes the recognition and processing of DNA lesions. UvrC both incises the 5' and 3' sides of the lesion. The N-terminal half is responsible for the 3' incision and the C-terminal half is responsible for the 5' incision. The sequence is that of UvrABC system protein C from Rhizobium johnstonii (strain DSM 114642 / LMG 32736 / 3841) (Rhizobium leguminosarum bv. viciae).